We begin with the raw amino-acid sequence, 175 residues long: NADH-ubiquinone oxidoreductase chain 6 (175 aa).

6 consecutive transmembrane segments (helical) span residues 1-21 (MMAY…VGFS), 25-45 (SPIY…GIVM), 47-67 (FGGS…MLVV), 87-107 (AAVL…VLYV), 116-136 (VFNF…FGVF), and 149-169 (YGVW…LVIL).

The protein belongs to the complex I subunit 6 family. In terms of assembly, core subunit of respiratory chain NADH dehydrogenase (Complex I) which is composed of 45 different subunits.

Its subcellular location is the mitochondrion inner membrane. It carries out the reaction a ubiquinone + NADH + 5 H(+)(in) = a ubiquinol + NAD(+) + 4 H(+)(out). Functionally, core subunit of the mitochondrial membrane respiratory chain NADH dehydrogenase (Complex I) which catalyzes electron transfer from NADH through the respiratory chain, using ubiquinone as an electron acceptor. Essential for the catalytic activity and assembly of complex I. The protein is NADH-ubiquinone oxidoreductase chain 6 (MT-ND6) of Ceratotherium simum (White rhinoceros).